Consider the following 984-residue polypeptide: Ephrin type-B receptor 1 (984 aa).

An N-terminal signal peptide occupies residues 1-17 (MALDCLLLFLLASAVAA). Over 18 to 540 (MEETLMDTRT…YKSELREQLP (523 aa)) the chain is Extracellular. The Eph LBD domain occupies 19-201 (EETLMDTRTA…FFKKCPSIVQ (183 aa)). 2 consecutive Fibronectin type-III domains span residues 322 to 432 (VPSG…TNQA) and 433 to 528 (APST…TLTD). 3 N-linked (GlcNAc...) asparagine glycosylation sites follow: Asn-334, Asn-426, and Asn-480. The chain crosses the membrane as a helical span at residues 541 to 563 (LIAGSAAAGVVFVVSLVAISIVC). At 564-984 (SRKRAYSKEA…QMNQSPSVMA (421 aa)) the chain is on the cytoplasmic side. Tyr-600 carries the phosphotyrosine modification. Residues 619–882 (VKIEEVIGAG…EIVNTLDKMI (264 aa)) enclose the Protein kinase domain. Residues 625 to 633 (IGAGEFGEV) and Lys-651 each bind ATP. Catalysis depends on Asp-744, which acts as the Proton acceptor. One can recognise an SAM domain in the interval 911–975 (TAFTTVDDWL…LSSIHSMRVQ (65 aa)). Tyr-928 bears the Phosphotyrosine; by autocatalysis mark. The PDZ-binding signature appears at 982–984 (VMA).

The protein belongs to the protein kinase superfamily. Tyr protein kinase family. Ephrin receptor subfamily. As to quaternary structure, heterotetramer upon binding of the ligand. The heterotetramer is composed of an ephrin dimer and a receptor dimer. Oligomerization is probably required to induce biological responses. Interacts with EPHB6; transphosphorylates EPHB6 to form an active signaling complex. Interacts with PICK1. Interacts (through Tyr-594) with NCK1 (via SH2 domain); activates the JUN cascade to regulate cell adhesion. The ligand-activated form interacts (through Tyr-928) with GRB7 and GRB10 (via SH2 domains). The ligand-activated form interacts (residues within the catalytic domain) with GRB2 (via SH2 domain). Interacts with GRB2, SHC1 and SRC; activates the MAPK/ERK cascade to regulate cell migration. Interacts with CBL; regulates receptor degradation through ubiquitination. Interacts with ACP1. Phosphorylated. Autophosphorylation is stimulated by the ligand EFNB1. Required for interaction with SH2 domain-containing interactors, for activation of the MAPK/ERK and JUN signaling cascades and for ubiquitination by CBL. Post-translationally, ubiquitinated; (EFNB1)ligand-induced poly- and/or multi-ubiquitination by CBL is regulated by SRC and leads to lysosomal degradation. Expressed in neural stem and progenitor cells in the dentate gyrus. Expressed in myogenic progenitor cells.

The protein resides in the cell membrane. It is found in the early endosome membrane. It localises to the cell projection. Its subcellular location is the dendrite. It catalyses the reaction L-tyrosyl-[protein] + ATP = O-phospho-L-tyrosyl-[protein] + ADP + H(+). Its function is as follows. Receptor tyrosine kinase which binds promiscuously transmembrane ephrin-B family ligands residing on adjacent cells, leading to contact-dependent bidirectional signaling into neighboring cells. The signaling pathway downstream of the receptor is referred to as forward signaling while the signaling pathway downstream of the ephrin ligand is referred to as reverse signaling. Cognate/functional ephrin ligands for this receptor include EFNB1, EFNB2 and EFNB3. During nervous system development, regulates retinal axon guidance redirecting ipsilaterally ventrotemporal retinal ganglion cells axons at the optic chiasm midline. This probably requires repulsive interaction with EFNB2. In the adult nervous system together with EFNB3, regulates chemotaxis, proliferation and polarity of the hippocampus neural progenitors. In addition to its role in axon guidance also plays an important redundant role with other ephrin-B receptors in development and maturation of dendritic spines and synapse formation. May also regulate angiogenesis. More generally, may play a role in targeted cell migration and adhesion. Upon activation by EFNB1 and probably other ephrin-B ligands activates the MAPK/ERK and the JNK signaling cascades to regulate cell migration and adhesion respectively. Involved in the maintenance of the pool of satellite cells (muscle stem cells) by promoting their self-renewal and reducing their activation and differentiation. In Mus musculus (Mouse), this protein is Ephrin type-B receptor 1 (Ephb1).